Consider the following 460-residue polypeptide: Inner membrane symporter YicJ (460 aa).

The Periplasmic portion of the chain corresponds to 1 to 11 (MKSEVLSVKEK). The next 2 membrane-spanning stretches (helical) occupy residues 12 to 32 (IGYG…MLYM) and 33 to 53 (MFFY…MFLV). Residues 54–80 (ARALDAISDPCMGLLADRTRSRWGKFR) lie on the Periplasmic side of the membrane. A helical transmembrane segment spans residues 81 to 101 (PWVLFGALPFGIVCVLAYSTP). At 102 to 116 (DLSMNGKMIYAAITY) the chain is on the cytoplasmic side. A helical transmembrane segment spans residues 117–137 (TLLTLLYTVVNIPYCALGGVI). Residues 138-152 (TNDPTQRISLQSWRF) are Periplasmic-facing. Residues 153–173 (VLATAGGMLSTVLMMPLVNLI) traverse the membrane as a helical segment. At 174–181 (GGDNKPLG) the chain is on the cytoplasmic side. Residues 182–202 (FQGGIAVLSVVAFMMLAFCFF) traverse the membrane as a helical segment. At 203–248 (TTKERVEAPPTTTSMREDLRDIWQNDQWRIVGLLTIFNILAVCVRG) the chain is on the periplasmic side. Residues 249-269 (GAMMYYVTWILGTPEVFVAFL) form a helical membrane-spanning segment. Residues 270-288 (TTYCVGNLIGSALAKPLTD) are Cytoplasmic-facing. A helical transmembrane segment spans residues 289–309 (WKCKVTIFWWTNALLAVISLA). Position 310 (Met-310) is a topological domain, periplasmic. Residues 311–331 (FFVPMQASITMFVFIFVIGVL) traverse the membrane as a helical segment. Residues 332–366 (HQLVTPIQWVMMSDTVDYGEWCNGKRLTGISFAGT) lie on the Cytoplasmic side of the membrane. A helical transmembrane segment spans residues 367 to 387 (LFVLKLGLAFGGALIGWMLAY). At 388–403 (GGYDAAEKAQNSATIS) the chain is on the periplasmic side. The helical transmembrane segment at 404 to 424 (IIIALFTIVPAICYLLSAIIA) threads the bilayer. Residues 425 to 460 (KRYYSLTTHNLKTVMEQLAQGKRRCQQQFTSQEVQN) are Cytoplasmic-facing.

Belongs to the sodium:galactoside symporter (TC 2.A.2) family.

The protein resides in the cell inner membrane. In Escherichia coli (strain K12), this protein is Inner membrane symporter YicJ (yicJ).